A 319-amino-acid chain; its full sequence is Alpha-hemolysin (319 aa).

An N-terminal signal peptide occupies residues 1 to 26 (MKTRIVSSVTTTLLLGSILMNPVAGA).

Belongs to the aerolysin family. In terms of assembly, self-assembles to first form a non-lytic oligomeric intermediate, and then, a mushroom-shaped homoheptamer structure of 100 Angstroms in length and up to 100 Angstroms in diameter. Interacts with human ADAM10; this interaction is required for toxin pore formation, disruption of focal adhesions, and hly-mediated cytotoxicity.

Its subcellular location is the secreted. Functionally, alpha-toxin binds to the membrane of eukaryotic cells (particularly red blood cells, RBC) forming pores, resulting in hemolysis, with the release of low-molecular weight molecules leading to eventual osmotic RBC lysis. Human RBCs bind much less alpha-toxin than do rabbit RBCs. Heptamer oligomerization and pore formation is required for lytic activity. The sequence is that of Alpha-hemolysin (hly) from Staphylococcus aureus.